The sequence spans 896 residues: Protein translocase subunit SecA (896 aa).

Residues Gln87, 105 to 109 (GEGKT), and Asp507 contribute to the ATP site. The interval 853 to 879 (ESLSENDEASETQTFRRQEKKIGRNDP) is disordered. Basic and acidic residues predominate over residues 866 to 876 (TFRRQEKKIGR). Cys880, Cys882, Cys891, and His892 together coordinate Zn(2+).

It belongs to the SecA family. As to quaternary structure, monomer and homodimer. Part of the essential Sec protein translocation apparatus which comprises SecA, SecYEG and auxiliary proteins SecDF-YajC and YidC. Requires Zn(2+) as cofactor.

It is found in the cell inner membrane. It localises to the cytoplasm. The catalysed reaction is ATP + H2O + cellular proteinSide 1 = ADP + phosphate + cellular proteinSide 2.. Functionally, part of the Sec protein translocase complex. Interacts with the SecYEG preprotein conducting channel. Has a central role in coupling the hydrolysis of ATP to the transfer of proteins into and across the cell membrane, serving both as a receptor for the preprotein-SecB complex and as an ATP-driven molecular motor driving the stepwise translocation of polypeptide chains across the membrane. The polypeptide is Protein translocase subunit SecA (Legionella pneumophila subsp. pneumophila (strain Philadelphia 1 / ATCC 33152 / DSM 7513)).